The following is a 175-amino-acid chain: Orotate phosphoribosyltransferase (175 aa).

5-phospho-alpha-D-ribose 1-diphosphate is bound by residues R88, K89, K92, and 114 to 122 (EDVVTTARG). T118 and R146 together coordinate orotate.

Belongs to the purine/pyrimidine phosphoribosyltransferase family. PyrE subfamily. In terms of assembly, homodimer. It depends on Mg(2+) as a cofactor.

The enzyme catalyses orotidine 5'-phosphate + diphosphate = orotate + 5-phospho-alpha-D-ribose 1-diphosphate. The protein operates within pyrimidine metabolism; UMP biosynthesis via de novo pathway; UMP from orotate: step 1/2. Functionally, catalyzes the transfer of a ribosyl phosphate group from 5-phosphoribose 1-diphosphate to orotate, leading to the formation of orotidine monophosphate (OMP). This chain is Orotate phosphoribosyltransferase, found in Methanocella arvoryzae (strain DSM 22066 / NBRC 105507 / MRE50).